The following is a 753-amino-acid chain: Inactive protein-tyrosine phosphatase egg-4 (753 aa).

Disordered regions lie at residues 26–46 and 75–145; these read TSLQ…STDN and SFRK…SGHG. Positions 35 to 46 are enriched in low complexity; that stretch reads NTDDSSADSTDN. 2 stretches are compositionally biased toward basic and acidic residues: residues 84 to 94 and 129 to 145; these read AQKDRRSKERL and VSEK…SGHG. The Tyrosine-protein phosphatase domain maps to 408-661; it reads MERRFEILEN…IFVHRLVAFF (254 aa).

This sequence belongs to the protein-tyrosine phosphatase family. In terms of assembly, part of a complex, consisting of pseudophosphatases egg-3, egg-4, egg-5 and kinase mbk-2; this complex is required for the oocyte-to-zygote transition. Interacts (via tyrosine-protein phosphatase domain) with kinase mbk-2 (via 'Tyr-619' and 'Tyr-621'); mbk-2 tyrosine phosphorylation enhances the interaction. The interaction inhibits mbk-2 kinase activity and is required for mbk-2 oocyte cortex localization. Interacts with egg-3.

It is found in the cytoplasm. The protein resides in the cell cortex. Its function is as follows. Inactive phosphatase which acts redundantly with egg-5 in the oocyte-to-zygote transition. Required for the polarization of cortical actin cytoskeleton rearrangement in the oocyte before and after fertilization. Together with egg-5, required for the cortical localization of kinase mbk-2 and for the inhibition of mbk-2 kinase activity in maturing oocyte until the end of meiosis I. Also required for kinase mbk-2, pseudophosphatase egg-3 and chitin synthase chs-1 localization to cytoplasmic foci after fertilization. The protein is Inactive protein-tyrosine phosphatase egg-4 of Caenorhabditis elegans.